Consider the following 603-residue polypeptide: ADP-ribosylation factor-binding protein GGA2 (603 aa).

A disordered region spans residues 1–22 (MAATAVAAGTGSPAGTESAEGG). The segment covering 13–22 (PAGTESAEGG) has biased composition (low complexity). In terms of domain architecture, VHS spans 36–166 (ATDPSMAEQD…MLKKQGIIKQ (131 aa)). The 128-residue stretch at 190–317 (DEEKSKLLTR…GVRLYKQVVE (128 aa)) folds into the GAT domain. Positions 318–473 (GRVSAGNAVP…VFVPLESVKP (156 aa)) are unstructured hinge. Residues 474–595 (SSLPPIVVYD…SEVGEVKDFP (122 aa)) enclose the GAE domain.

The protein belongs to the GGA protein family. Monomer. Interacts with NECAP1, TSG101, UBC and AFTPH/aftiphilin. Interacts with CNST. Interacts with GGA1 and GGA3. Binds to clathrin and activated ARFs, such as ARF1, ARF5 and ARF6. Binds RABEP1 and RABGEF1. Interacts with the type-I membrane proteins LRP3, M6PR/CD-MPR, IGF2R/CI-MPR and BACE1. Interacts (via N-terminal VHS domain) with SORL1/sorLA and SORT1 (via C-terminal cytosolic domain). Binds the accessory proteins CCDC91, P200, SYNRG, EPN4 and NECAP2. Interacts with ADRA2B. Interacts (via VHS domain) with PIK4B; the interaction is important for PIK4B location at the Golgi apparatus membrane. In terms of processing, ubiquitinated.

It is found in the golgi apparatus. Its subcellular location is the trans-Golgi network membrane. The protein localises to the endosome membrane. It localises to the early endosome membrane. Functionally, plays a role in protein sorting and trafficking between the trans-Golgi network (TGN) and endosomes. Mediates the ARF-dependent recruitment of clathrin to the TGN and binds ubiquitinated proteins and membrane cargo molecules with a cytosolic acidic cluster-dileucine (DXXLL) motif. Mediates export of the GPCR receptor ADRA2B to the cell surface. Regulates retrograde transport of phosphorylated form of BACE1 from endosomes to the trans-Golgi network. The polypeptide is ADP-ribosylation factor-binding protein GGA2 (Gga2) (Mus musculus (Mouse)).